Reading from the N-terminus, the 200-residue chain is Protein-methionine-sulfoxide reductase heme-binding subunit MsrQ (200 aa).

The next 5 helical transmembrane spans lie at 8 to 28 (ITWL…WLFY), 54 to 74 (LLLA…PLLI), 79 to 99 (LLGL…SLLE), 116 to 136 (PYLT…LTSF), and 153 to 173 (FIYL…KILS).

This sequence belongs to the MsrQ family. As to quaternary structure, heterodimer of a catalytic subunit (MsrP) and a heme-binding subunit (MsrQ). The cofactor is FMN. Heme b serves as cofactor.

The protein resides in the cell inner membrane. Functionally, part of the MsrPQ system that repairs oxidized periplasmic proteins containing methionine sulfoxide residues (Met-O), using respiratory chain electrons. Thus protects these proteins from oxidative-stress damage caused by reactive species of oxygen and chlorine generated by the host defense mechanisms. MsrPQ is essential for the maintenance of envelope integrity under bleach stress, rescuing a wide series of structurally unrelated periplasmic proteins from methionine oxidation. MsrQ provides electrons for reduction to the reductase catalytic subunit MsrP, using the quinone pool of the respiratory chain. The protein is Protein-methionine-sulfoxide reductase heme-binding subunit MsrQ of Cronobacter sakazakii (strain ATCC BAA-894) (Enterobacter sakazakii).